A 123-amino-acid chain; its full sequence is Small ribosomal subunit protein uS12 (123 aa).

Residues 1–28 (MPTIQQLIRKPRQPKVKRSKSQHLEQCP) are disordered. A compositionally biased stretch (basic residues) spans 9–21 (RKPRQPKVKRSKS). At aspartate 89 the chain carries 3-methylthioaspartic acid.

Belongs to the universal ribosomal protein uS12 family. In terms of assembly, part of the 30S ribosomal subunit. Contacts proteins S8 and S17. May interact with IF1 in the 30S initiation complex.

Functionally, with S4 and S5 plays an important role in translational accuracy. Its function is as follows. Interacts with and stabilizes bases of the 16S rRNA that are involved in tRNA selection in the A site and with the mRNA backbone. Located at the interface of the 30S and 50S subunits, it traverses the body of the 30S subunit contacting proteins on the other side and probably holding the rRNA structure together. The combined cluster of proteins S8, S12 and S17 appears to hold together the shoulder and platform of the 30S subunit. This Ruegeria pomeroyi (strain ATCC 700808 / DSM 15171 / DSS-3) (Silicibacter pomeroyi) protein is Small ribosomal subunit protein uS12.